Here is a 557-residue protein sequence, read N- to C-terminus: MKSDIEIAQDTKELPITEIAKKVDLQPDEIELYGNDKAKISWKGINRIKQGKKLGKLILVTSISPTPAGEGKSTITIGLGDAISNQLHKNTLIALREPSMGPVFGLKGGATGGGYAQIITMEDINLHFTGDMHALTSAIDTLAALVDNYIYQDNSLELDPNRILLKRGIDVNDRTLRKITIGQGSRFNGIEHEASFAITVANELMAILCLATDIDDLKKRIGNMLVGFSVKDEPVYVKDLGFEGAIAALLSTALKPNLVQTLEHTPAIVHGGPFANIAHGANSVIATNTALHLSDYVLTEAGFGADLGGQKFMDFVSNHLDKRPDAVVVVATVRALKYQAEETTDHLDEENIPALEKGFENLKRHMENMAHYGVPVIVLINKFASDTEQELSKLKELVKADGFECEVVSYHDEGSKGGIKAAEKVVELTNKASDFTSVYEPTDSVEEKISKIAHNIYHAKDIEYSDKAKDQLAEIKKMGKDNLPVIMAKTQYSFTDKKSILGAPKDFTLHVKNLALKNGAGFIVVATGSILDMPGLPKYPAALDIDVDNNGKISGLF.

Position 66–73 (66–73 (TPAGEGKS)) interacts with ATP.

Belongs to the formate--tetrahydrofolate ligase family.

The enzyme catalyses (6S)-5,6,7,8-tetrahydrofolate + formate + ATP = (6R)-10-formyltetrahydrofolate + ADP + phosphate. It participates in one-carbon metabolism; tetrahydrofolate interconversion. This chain is Formate--tetrahydrofolate ligase, found in Lactobacillus johnsonii (strain CNCM I-12250 / La1 / NCC 533).